The chain runs to 288 residues: 2-hydroxy-6-oxononadienedioate/2-hydroxy-6-oxononatrienedioate hydrolase (288 aa).

The AB hydrolase-1 domain maps to 38-273 (VVLLHGSGPG…DCGHWAQWEH (236 aa)). His-267 (proton acceptor) is an active-site residue.

Belongs to the AB hydrolase superfamily. MhpC family. As to quaternary structure, homodimer.

It carries out the reaction (2Z,4E)-2-hydroxy-6-oxonona-2,4-dienedioate + H2O = (2Z)-2-hydroxypenta-2,4-dienoate + succinate + H(+). The enzyme catalyses (2Z,4E,7E)-2-hydroxy-6-oxonona-2,4,7-trienedioate + H2O = (2Z)-2-hydroxypenta-2,4-dienoate + fumarate + H(+). Its pathway is aromatic compound metabolism; 3-phenylpropanoate degradation. Catalyzes the cleavage of the C5-C6 bond of 2-hydroxy-6-oxononadienedioate and 2-hydroxy-6-oxononatrienedioate, a dienol ring fission product of the bacterial meta-cleavage pathway for degradation of phenylpropionic acid. The sequence is that of 2-hydroxy-6-oxononadienedioate/2-hydroxy-6-oxononatrienedioate hydrolase from Escherichia coli O139:H28 (strain E24377A / ETEC).